A 495-amino-acid polypeptide reads, in one-letter code: Serine/threonine protein phosphatase 2A 57 kDa regulatory subunit B' alpha isoform (495 aa).

Residues 1–13 show a composition bias toward basic residues; sequence MFKKIMKGANRKA. Disordered stretches follow at residues 1 to 61 and 462 to 495; these read MFKK…AATT and QAKS…MITS. The span at 49–61 shows a compositional bias: polar residues; that stretch reads VPSSPNSMAAATT.

This sequence belongs to the phosphatase 2A regulatory subunit B56 family. In terms of assembly, PP2A consists of a common heteromeric enzyme, composed of a catalytic subunit (subunits C), a constant regulatory subunit (subunit A), and a variety of regulatory subunits such as subunits B (the R2/B/PR55/B55, R3/B''/PR72/PR130/PR59 and R5/B'/B56 families). Interacts with BZR1. Interacts with BRI1. Interacts with SRK2E/OST1. Expressed ubiquitously, higher levels in leaves.

It is found in the nucleus. Its subcellular location is the cytoplasm. Functionally, the B regulatory subunit may modulate substrate selectivity and catalytic activity, and may also direct the localization of the catalytic enzyme to a particular subcellular compartment. Required for the formation of the PP2A holoenzyme that positively regulates brassinosteroid signaling by dephosphorylating and activating BZR1. In Arabidopsis thaliana (Mouse-ear cress), this protein is Serine/threonine protein phosphatase 2A 57 kDa regulatory subunit B' alpha isoform (B'ALPHA).